The primary structure comprises 339 residues: Transcription initiation factor IIB (339 aa).

The TFIIB-type zinc-finger motif lies at 39–70 (EELICPVCGSKSIIKDYERAEIVCEMCGCVLQ). Zn(2+) is bound by residues cysteine 43, cysteine 46, cysteine 62, and cysteine 65. 2 consecutive repeat copies span residues 156 to 239 (SELD…SREL) and 250 to 331 (DYVP…ELTE).

The protein belongs to the TFIIB family.

Stabilizes TBP binding to an archaeal box-A promoter. Also responsible for recruiting RNA polymerase II to the pre-initiation complex (DNA-TBP-TFIIB). In Methanococcus maripaludis (strain C5 / ATCC BAA-1333), this protein is Transcription initiation factor IIB.